The chain runs to 105 residues: Hydrogen cyanide synthase subunit HcnA (105 aa).

Positions 16–97 (ADMTISLNGQ…GMQVQTLSNR (82 aa)) constitute a 2Fe-2S ferredoxin-type domain. The [2Fe-2S] cluster site is built by cysteine 60, cysteine 65, cysteine 68, and cysteine 81.

Heterotrimer of HcnA, HcnB and HcnC.

The protein localises to the cell membrane. It carries out the reaction glycine + 2 A = hydrogen cyanide + 2 AH2 + CO2. Functionally, a three-component membrane-bound flavoenzyme that catalyzes the formation of hydrogen cyanide, a secondary metabolite, by transfer of electrons to a cyanide-resistant branch of the aerobic respiratory chain. Contributes to suppression of black root rot of tobacco. In Pseudomonas protegens (strain DSM 19095 / LMG 27888 / CFBP 6595 / CHA0), this protein is Hydrogen cyanide synthase subunit HcnA.